The sequence spans 810 residues: Plasminogen (810 aa).

An N-terminal signal peptide occupies residues Met1–Gly19. Residues Ile20–Met98 enclose the PAN domain. 24 disulfides stabilise this stretch: Cys49–Cys73, Cys53–Cys61, Cys103–Cys181, Cys124–Cys164, Cys152–Cys176, Cys185–Cys262, Cys188–Cys316, Cys206–Cys245, Cys234–Cys257, Cys275–Cys352, Cys296–Cys335, Cys324–Cys347, Cys379–Cys456, Cys400–Cys439, Cys428–Cys451, Cys482–Cys561, Cys503–Cys544, Cys532–Cys556, Cys569–Cys685, Cys579–Cys586, Cys607–Cys623, Cys699–Cys766, Cys729–Cys745, and Cys756–Cys784. Kringle domains lie at Cys103–Cys181, Cys185–Cys262, Cys275–Cys352, Cys379–Cys456, and Cys482–Cys561. N-linked (GlcNAc...) asparagine glycosylation is present at Asn339. The segment at Lys398–Tyr418 is disordered. In terms of domain architecture, Peptidase S1 spans Arg582 to Arg808. Ser598 carries the phosphoserine modification. Active-site charge relay system residues include His622 and Asp665. Residue Ser760 is the Charge relay system of the active site.

The protein belongs to the peptidase S1 family. Plasminogen subfamily. Interacts with CSPG4 and AMOT. Interacts (via the Kringle domains) with HRG; the interaction tethers PLG to the cell surface and enhances its activation. Interacts (via Kringle 4 domain) with ADA; the interaction stimulates PLG activation when in complex with DPP4. Angiostatin: Interacts with ATP5F1A; the interaction inhibits most of the angiogenic effects of angiostatin. In the presence of the inhibitor, the activation involves only cleavage after Arg-582, yielding two chains held together by two disulfide bonds. In the absence of the inhibitor, the activation involves additionally the removal of the activation peptide.

The protein resides in the secreted. The enzyme catalyses Preferential cleavage: Lys-|-Xaa &gt; Arg-|-Xaa, higher selectivity than trypsin. Converts fibrin into soluble products.. With respect to regulation, converted into plasmin by plasminogen activators, both plasminogen and its activator being bound to fibrin. Cannot be activated with streptokinase. Functionally, plasmin dissolves the fibrin of blood clots and acts as a proteolytic factor in a variety of other processes including embryonic development, tissue remodeling, tumor invasion, and inflammation. In ovulation, weakens the walls of the Graafian follicle. It activates the urokinase-type plasminogen activator, collagenases and several complement zymogens, such as C1, C4 and C5. Cleavage of fibronectin and laminin leads to cell detachment and apoptosis. Also cleaves fibrin, thrombospondin and von Willebrand factor. Its role in tissue remodeling and tumor invasion may be modulated by CSPG4. Binds to cells. The sequence is that of Plasminogen (PLG) from Erinaceus europaeus (Western European hedgehog).